Consider the following 365-residue polypeptide: Nudix hydrolase 24, chloroplastic (365 aa).

A chloroplast-targeting transit peptide spans 1–30; sequence MASAFCSLCPTPTSLFSSHALIPTLQWRSS. Positions 196 to 337 constitute a Nudix hydrolase domain; that stretch reads GYAIHVNGYV…KDSCSLVIID (142 aa). The short motif at 235–256 is the Nudix box element; sequence GGLPHGISVCENLVKECEEEAG. Mg(2+) is bound by residues Glu-250 and Glu-254.

Belongs to the Nudix hydrolase family. Mg(2+) is required as a cofactor. Requires Mn(2+) as cofactor. Expressed in leaves.

The protein localises to the plastid. It is found in the chloroplast. In terms of biological role, probably mediates the hydrolysis of some nucleoside diphosphate derivatives. This chain is Nudix hydrolase 24, chloroplastic (NUDT24), found in Arabidopsis thaliana (Mouse-ear cress).